The primary structure comprises 366 residues: tRNA/tmRNA (uracil-C(5))-methyltransferase (366 aa).

S-adenosyl-L-methionine-binding residues include Q190, Y218, N223, E239, and D299. Catalysis depends on C324, which acts as the Nucleophile. E358 (proton acceptor) is an active-site residue.

It belongs to the class I-like SAM-binding methyltransferase superfamily. RNA M5U methyltransferase family. TrmA subfamily.

It catalyses the reaction uridine(54) in tRNA + S-adenosyl-L-methionine = 5-methyluridine(54) in tRNA + S-adenosyl-L-homocysteine + H(+). It carries out the reaction uridine(341) in tmRNA + S-adenosyl-L-methionine = 5-methyluridine(341) in tmRNA + S-adenosyl-L-homocysteine + H(+). Dual-specificity methyltransferase that catalyzes the formation of 5-methyluridine at position 54 (m5U54) in all tRNAs, and that of position 341 (m5U341) in tmRNA (transfer-mRNA). The sequence is that of tRNA/tmRNA (uracil-C(5))-methyltransferase from Escherichia coli O127:H6 (strain E2348/69 / EPEC).